The following is a 544-amino-acid chain: Chaperonin GroEL 4 (544 aa).

Residues 30-33 (TLGP), Lys51, 87-91 (DGTTT), Gly415, and Asp496 each bind ATP.

Belongs to the chaperonin (HSP60) family. Forms a cylinder of 14 subunits composed of two heptameric rings stacked back-to-back. Interacts with the co-chaperonin GroES.

It localises to the cytoplasm. The enzyme catalyses ATP + H2O + a folded polypeptide = ADP + phosphate + an unfolded polypeptide.. Functionally, together with its co-chaperonin GroES, plays an essential role in assisting protein folding. The GroEL-GroES system forms a nano-cage that allows encapsulation of the non-native substrate proteins and provides a physical environment optimized to promote and accelerate protein folding. This Sinorhizobium medicae (strain WSM419) (Ensifer medicae) protein is Chaperonin GroEL 4.